Reading from the N-terminus, the 197-residue chain is uncharacterized protein (197 aa).

An N-terminal signal peptide occupies residues 1 to 19 (MKLASLLVGSLMLAVPALA).

It is found in the secreted. This is an uncharacterized protein from Arthroderma benhamiae (strain ATCC MYA-4681 / CBS 112371) (Trichophyton mentagrophytes).